Consider the following 427-residue polypeptide: 3-phosphoshikimate 1-carboxyvinyltransferase (427 aa).

3-phosphoshikimate-binding residues include lysine 22, serine 23, and arginine 27. Lysine 22 is a phosphoenolpyruvate binding site. Phosphoenolpyruvate is bound by residues glycine 94 and arginine 122. Serine 165, glutamine 167, aspartate 313, and lysine 340 together coordinate 3-phosphoshikimate. Residue glutamine 167 coordinates phosphoenolpyruvate. Residue aspartate 313 is the Proton acceptor of the active site. Arginine 344 and arginine 386 together coordinate phosphoenolpyruvate.

The protein belongs to the EPSP synthase family. Monomer.

It is found in the cytoplasm. The enzyme catalyses 3-phosphoshikimate + phosphoenolpyruvate = 5-O-(1-carboxyvinyl)-3-phosphoshikimate + phosphate. The protein operates within metabolic intermediate biosynthesis; chorismate biosynthesis; chorismate from D-erythrose 4-phosphate and phosphoenolpyruvate: step 6/7. Catalyzes the transfer of the enolpyruvyl moiety of phosphoenolpyruvate (PEP) to the 5-hydroxyl of shikimate-3-phosphate (S3P) to produce enolpyruvyl shikimate-3-phosphate and inorganic phosphate. This chain is 3-phosphoshikimate 1-carboxyvinyltransferase, found in Koribacter versatilis (strain Ellin345).